Here is a 1229-residue protein sequence, read N- to C-terminus: Chitin synthase 4 (1229 aa).

Positions 1–196 are disordered; that stretch reads MSLPERPGAK…IVKEGKRKEK (196 aa). Residues 1 to 202 lie on the Cytoplasmic side of the membrane; that stretch reads MSLPERPGAK…RKEKIPEQLR (202 aa). Over residues 18–27 the composition is skewed to basic residues; the sequence is SYRKSPSRRN. Residues 43-66 are compositionally biased toward polar residues; that stretch reads GQHQRGPSVNSFAETIRSPNSNIE. The span at 92–105 shows a compositional bias: basic and acidic residues; that stretch reads IRPERNRIDRDHPN. Residues 137–150 are compositionally biased toward low complexity; that stretch reads SGPPSGSNSASGSG. Composition is skewed to basic and acidic residues over residues 164–177 and 187–196; these read SGRETVAEKSDNTR and IVKEGKRKEK. A helical transmembrane segment spans residues 203–223; sequence PPSAWNVYCAVITFWSPDFIM. Topologically, residues 224 to 240 are extracellular; it reads KCCGMPAKAQRRAWREK. The helical transmembrane segment at 241 to 261 threads the bilayer; sequence IGLISLILIIMGVVGFLTFGF. The Cytoplasmic segment spans residues 262 to 495; the sequence is NQAVCGGPVL…IKVGTVDTDT (234 aa). The helical transmembrane segment at 496-516 threads the bilayer; it reads VGCIAAKVVLYVSLALILSVV. The Extracellular portion of the chain corresponds to 517 to 1054; the sequence is GARFTLALIF…LCGTFCFSMQ (538 aa). Disordered stretches follow at residues 539–589 and 601–648; these read TSQT…RSSF and GAER…DPYA. Over residues 568–581 the composition is skewed to low complexity; it reads GDVGSSVAGASSSD. N-linked (GlcNAc...) asparagine glycans are attached at residues N608, N635, and N1030. The span at 608 to 648 shows a compositional bias: polar residues; sequence NKSMPTTMASQASGGYMGPSSTAYRETNESRTSFLKSDPYA. The chain crosses the membrane as a helical span at residues 1055 to 1075; sequence FVIFIELIGTLVLPAAIAFTF. Residues 1076–1088 are Cytoplasmic-facing; the sequence is YVVIISIINQPPQ. The helical transmembrane segment at 1089-1109 threads the bilayer; it reads IIPLVLLGLILGLPAILIIIT. The Extracellular portion of the chain corresponds to 1110–1114; that stretch reads AHSWS. Residues 1115–1135 form a helical membrane-spanning segment; the sequence is YVLWMLIYLLSLPVWNFVLPA. Residues 1136-1229 are Cytoplasmic-facing; the sequence is YAFWKFDDFS…QQYDEYYSDA (94 aa). A disordered region spans residues 1210 to 1229; that stretch reads WASAPPHHHQQQYDEYYSDA.

The protein belongs to the chitin synthase family. Class IV subfamily.

It is found in the cell membrane. It catalyses the reaction [(1-&gt;4)-N-acetyl-beta-D-glucosaminyl](n) + UDP-N-acetyl-alpha-D-glucosamine = [(1-&gt;4)-N-acetyl-beta-D-glucosaminyl](n+1) + UDP + H(+). Functionally, polymerizes chitin, a structural polymer of the cell wall and septum, by transferring the sugar moiety of UDP-GlcNAc to the non-reducing end of the growing chitin polymer. Might function as a negative regulator on expression of other CHS genes. The sequence is that of Chitin synthase 4 from Pyricularia oryzae (strain 70-15 / ATCC MYA-4617 / FGSC 8958) (Rice blast fungus).